A 476-amino-acid chain; its full sequence is Adenosylhomocysteinase (476 aa).

Substrate contacts are provided by Thr-62, Asp-141, and Glu-201. 202–204 (TTT) is a binding site for NAD(+). Lys-231 and Asp-235 together coordinate substrate. Residues Asn-236, 265 to 270 (GYGDVG), Glu-288, Asn-323, 344 to 346 (IGH), and Asn-389 each bind NAD(+).

This sequence belongs to the adenosylhomocysteinase family. NAD(+) serves as cofactor.

The protein resides in the cytoplasm. It carries out the reaction S-adenosyl-L-homocysteine + H2O = L-homocysteine + adenosine. It functions in the pathway amino-acid biosynthesis; L-homocysteine biosynthesis; L-homocysteine from S-adenosyl-L-homocysteine: step 1/1. In terms of biological role, may play a key role in the regulation of the intracellular concentration of adenosylhomocysteine. This Myxococcus xanthus (strain DK1622) protein is Adenosylhomocysteinase.